The primary structure comprises 456 residues: Glycosyl hydrolase family 109 protein 2 (456 aa).

The segment at residues 1 to 33 is a signal peptide (tat-type signal); the sequence is MSGFDRRSFLKASMVTAAATALAACASSERATG. NAD(+) contacts are provided by residues 63–64, D85, 134–137, 154–155, and N183; these read ER, WAWH, and EV. Substrate is bound by residues Y212, R231, 243-246, and Y325; that span reads YPTH. NAD(+) is bound at residue Y243.

The protein belongs to the Gfo/Idh/MocA family. Glycosyl hydrolase 109 subfamily. Requires NAD(+) as cofactor. Predicted to be exported by the Tat system. The position of the signal peptide cleavage has not been experimentally proven.

Its function is as follows. Glycosidase. This is Glycosyl hydrolase family 109 protein 2 from Shewanella sp. (strain ANA-3).